The following is a 322-amino-acid chain: Beta-ketoacyl-[acyl-carrier-protein] synthase III (322 aa).

Catalysis depends on residues C113 and H249. Residues 250–254 form an ACP-binding region; it reads QANLR. N279 is an active-site residue.

The protein belongs to the thiolase-like superfamily. FabH family. In terms of assembly, homodimer.

Its subcellular location is the cytoplasm. The enzyme catalyses malonyl-[ACP] + acetyl-CoA + H(+) = 3-oxobutanoyl-[ACP] + CO2 + CoA. The protein operates within lipid metabolism; fatty acid biosynthesis. Catalyzes the condensation reaction of fatty acid synthesis by the addition to an acyl acceptor of two carbons from malonyl-ACP. Catalyzes the first condensation reaction which initiates fatty acid synthesis and may therefore play a role in governing the total rate of fatty acid production. Possesses both acetoacetyl-ACP synthase and acetyl transacylase activities. Its substrate specificity determines the biosynthesis of branched-chain and/or straight-chain of fatty acids. The protein is Beta-ketoacyl-[acyl-carrier-protein] synthase III of Granulibacter bethesdensis (strain ATCC BAA-1260 / CGDNIH1).